Reading from the N-terminus, the 425-residue chain is Acyl-lipid (8-3)-desaturase (425 aa).

The interval 1–25 (MPPRDSYSYAAPPSAQLHEVDTPQE) is disordered. In terms of domain architecture, Cytochrome b5 heme-binding spans 18 to 93 (HEVDTPQEHD…SRPVHKGYSP (76 aa)). Positions 47 and 69 each coordinate heme. A helical transmembrane segment spans residues 134–154 (VAGAALIWHGYTFAGIAMLGV). Residues 164 to 168 (HEGGH) carry the Histidine box-1 motif. A helical membrane pass occupies residues 175 to 197 (IAFDRAIQVACYGLGCGMSGAWW). The Histidine box-2 signature appears at 201-206 (HNKHHA). 2 helical membrane passes run 241-261 (WLSM…ALGW) and 297-317 (GAGY…MYIF). A Histidine box-3 motif is present at residues 365-369 (QIEHH).

The protein belongs to the fatty acid desaturase type 1 family. Fe(2+) serves as cofactor.

Its subcellular location is the membrane. The enzyme catalyses an (8Z,11Z,14Z)-icosatrienoyl-containing glycerolipid + 2 Fe(II)-[cytochrome b5] + O2 + 2 H(+) = (5Z,8Z,11Z,14Z)-eicosatetraenoyl-containing glycerolipid + 2 Fe(III)-[cytochrome b5] + 2 H2O. It catalyses the reaction an (8Z,11Z,14Z,17Z)-eicosatetraenoyl-containing glycerolipid + 2 Fe(II)-[cytochrome b5] + O2 + 2 H(+) = a (5Z,8Z,11Z,14Z,17Z)-eicosapentaenoyl-containing glycerolipid + 2 Fe(III)-[cytochrome b5] + 2 H2O. Its function is as follows. Fatty acid desaturase that introduces a cis double bond at the 5-position in 20-carbon polyunsaturated fatty acids incorporated in a glycerolipid that contain a Delta(8) double bond. The sequence is that of Acyl-lipid (8-3)-desaturase from Rebecca salina (Marine microalga).